Consider the following 289-residue polypeptide: 7-methylguanosine phosphate-specific 5'-nucleotidase (289 aa).

Asp-38 (nucleophile) is an active-site residue. The Mg(2+) site is built by Asp-38 and Asp-40. The Proton donor role is filled by Asp-40. Glu-85 lines the CMP pocket. Glu-85 lines the N(7)-methyl-GMP pocket. Residues 153–154 and Lys-202 each bind substrate; that span reads SA. Asp-227 provides a ligand contact to Mg(2+).

It belongs to the pyrimidine 5'-nucleotidase family. As to quaternary structure, monomer.

The protein localises to the cytoplasm. It catalyses the reaction N(7)-methyl-GMP + H2O = N(7)-methylguanosine + phosphate. It carries out the reaction CMP + H2O = cytidine + phosphate. The catalysed reaction is a ribonucleoside 5'-phosphate + H2O = a ribonucleoside + phosphate. Functionally, specifically hydrolyzes 7-methylguanosine monophosphate (m(7)GMP) to 7-methylguanosine and inorganic phosphate. The specific activity for m(7)GMP may protect cells against undesired salvage of m(7)GMP and its incorporation into nucleic acids. Also has weak activity for CMP. UMP and purine nucleotides are poor substrates. This Gallus gallus (Chicken) protein is 7-methylguanosine phosphate-specific 5'-nucleotidase (NT5C3B).